The sequence spans 796 residues: Peroxisome proliferator-activated receptor gamma coactivator 1-alpha (796 aa).

Lys-77 bears the N6-acetyllysine mark. Residues 98-138 (PVDEDGLPSFDALTDGDVTTDNEASPSSMPDGTPPPQEAEE) are disordered. Residues 114 to 127 (DVTTDNEASPSSMP) are compositionally biased toward polar residues. Residues 142–146 (LKKLL) carry the LXXLL motif motif. N6-acetyllysine is present on Lys-144. At Thr-176 the chain carries Phosphothreonine; by AMPK. N6-acetyllysine is present on Lys-182. Residues 211–275 (YLTTNDDPPH…NDPKGSPFEN (65 aa)) are disordered. Residues 217-235 (DPPHTKPTENRNSSRDKCA) show a composition bias toward basic and acidic residues. Residues 242-258 (TQPQSQHAQAKPTTLSL) show a composition bias toward polar residues. N6-acetyllysine is present on residues Lys-252, Lys-269, Lys-276, Lys-319, Lys-345, Lys-411, Lys-440, and Lys-449. The tract at residues 288–350 (GTAGLTPPTT…HSTKKGPEQS (63 aa)) is disordered. Residues 291–337 (GLTPPTTPPHKANQDNPFKASPKLKPSCKTVVPPPTKRARYSECSGT) form an interaction with PPARG region. The tract at residues 348–796 (EQSELYAQLS…LKEAQRSLRR (449 aa)) is mediates interaction with RNF34. The residue at position 537 (Ser-537) is a Phosphoserine; by AMPK. 2 disordered regions span residues 541 to 597 (FNSP…SSRS) and 611 to 669 (HRNS…QKQK). The segment covering 561 to 576 (QRMRSRSRSFSRHRSC) has biased composition (basic residues). The span at 577-597 (SRSPYSRSRSRSPGSRSSSRS) shows a compositional bias: low complexity. The span at 620–629 (SRSRSPYSRR) shows a compositional bias: basic residues. Residues 630–669 (PRYDSYEANEHERLKRDEYRREYEKRESERAKQRERQKQK) are compositionally biased toward basic and acidic residues. The 77-residue stretch at 675–751 (RVIYVGKIRP…TDFELYFCGR (77 aa)) folds into the RRM domain. Lys-756 and Lys-777 each carry N6-acetyllysine.

In terms of assembly, homooligomer. Interacts with MYBBP1A; inhibits MYBBP1A transcriptional activation. Interacts with PRDM16, LPIN1 and PML. Interacts (via LXXLL motif) with RORA and RORC (via AF-2 motif); activates RORA and RORC transcriptional activation. Interacts with LRPPRC. Interacts with FOXO1. Interacts with NR5A2. Post-translationally, phosphorylation by AMPK in skeletal muscle increases activation of its own promoter. Phosphorylated by CLK2. Heavily acetylated by KAT2A/GCN5 under conditions of high nutrients, leading to inactivation of PPARGC1A. Deacetylated by SIRT1 in low nutrients/high NAD conditions, leading to its activation. In terms of processing, ubiquitinated. Ubiquitination by RNF34 induces proteasomal degradation.

It localises to the nucleus. The protein resides in the PML body. Transcriptional coactivator for steroid receptors and nuclear receptors. Greatly increases the transcriptional activity of PPARG and thyroid hormone receptor on the uncoupling protein promoter. Can regulate key mitochondrial genes that contribute to the program of adaptive thermogenesis. Plays an essential role in metabolic reprogramming in response to dietary availability through coordination of the expression of a wide array of genes involved in glucose and fatty acid metabolism. Acts as a key regulator of gluconeogenesis: stimulates hepatic gluconeogenesis by increasing the expression of gluconeogenic enzymes, and acting together with FOXO1 to promote the fasting gluconeogenic program. Induces the expression of PERM1 in the skeletal muscle in an ESRRA-dependent manner. Also involved in the integration of the circadian rhythms and energy metabolism. Required for oscillatory expression of clock genes, such as BMAL1 and NR1D1, through the coactivation of RORA and RORC, and metabolic genes, such as PDK4 and PEPCK. The sequence is that of Peroxisome proliferator-activated receptor gamma coactivator 1-alpha (Ppargc1a) from Rattus norvegicus (Rat).